A 383-amino-acid polypeptide reads, in one-letter code: MSVTTLNGQPTLNISGPGQTALSRLDPLKKVFTKFFSSIPQKVRGHVVAVIGELIGTTAFLFIAFSAAEVALASANDNKGDKVSYETKSISTTQILFIAFGAGISLVVNAWTFFRISGGLFDPAVSIALFFVGAIDLTRCVLLCIAQCLGAIAASAMAYGLYHGGLHTATTLKPGMSPAQGVIVEMILTCQLCFTVLMLAAEKHEATFLAPLGIGLSVFIGELAGVFWTGGSMNPARSLGPAVVTLSFPSYHWIYWVGPIAGAGLASIIYKLIKALEYETAQLSEGEMHAHPVEDSEKASGHTGPCECMCFKVAAQGQSSAASTLQVATTDARKSSSLVPTKSTKSGNSEVKKTETVVEEPAKTQPKPAPAADDGFFGEMYAD.

Residues 1–46 lie on the Cytoplasmic side of the membrane; that stretch reads MSVTTLNGQPTLNISGPGQTALSRLDPLKKVFTKFFSSIPQKVRGH. Residues 47-67 form a helical membrane-spanning segment; sequence VVAVIGELIGTTAFLFIAFSA. Residues 68 to 93 are Extracellular-facing; sequence AEVALASANDNKGDKVSYETKSISTT. A helical transmembrane segment spans residues 94-114; sequence QILFIAFGAGISLVVNAWTFF. Position 115 (Arg-115) is a topological domain, cytoplasmic. Residues 116-136 traverse the membrane as a helical segment; sequence ISGGLFDPAVSIALFFVGAID. The short motif at 122 to 124 is the NPA 1 element; it reads DPA. The Extracellular portion of the chain corresponds to 137–140; the sequence is LTRC. Residues 141–161 form a helical membrane-spanning segment; that stretch reads VLLCIAQCLGAIAASAMAYGL. Residues 162–180 lie on the Cytoplasmic side of the membrane; it reads YHGGLHTATTLKPGMSPAQ. Residues 181–201 traverse the membrane as a helical segment; sequence GVIVEMILTCQLCFTVLMLAA. At 202–207 the chain is on the extracellular side; that stretch reads EKHEAT. A helical transmembrane segment spans residues 208–228; that stretch reads FLAPLGIGLSVFIGELAGVFW. Residues 229-252 lie on the Cytoplasmic side of the membrane; the sequence is TGGSMNPARSLGPAVVTLSFPSYH. Residues 234–236 carry the NPA 2 motif; sequence NPA. A helical membrane pass occupies residues 253–273; sequence WIYWVGPIAGAGLASIIYKLI. Over 274-383 the chain is Extracellular; it reads KALEYETAQL…DGFFGEMYAD (110 aa). Residues 332-349 are compositionally biased toward polar residues; that stretch reads ARKSSSLVPTKSTKSGNS. Positions 332–383 are disordered; sequence ARKSSSLVPTKSTKSGNSEVKKTETVVEEPAKTQPKPAPAADDGFFGEMYAD. Over residues 350–362 the composition is skewed to basic and acidic residues; that stretch reads EVKKTETVVEEPA. The span at 363 to 372 shows a compositional bias: low complexity; the sequence is KTQPKPAPAA.

This sequence belongs to the MIP/aquaporin (TC 1.A.8) family.

It is found in the membrane. The catalysed reaction is H2O(in) = H2O(out). In terms of biological role, water channel required to facilitate the transport of water across membranes. May play a role in the vegetative growth. This Botryotinia fuckeliana (strain B05.10) (Noble rot fungus) protein is Aquaporin-5.